Consider the following 299-residue polypeptide: tRNA dimethylallyltransferase (299 aa).

Residue Gly-22 to Thr-29 coordinates ATP. Thr-24–Thr-29 lines the substrate pocket. Interaction with substrate tRNA regions lie at residues Asp-47–Gln-50 and Gln-172–Arg-176.

Belongs to the IPP transferase family. As to quaternary structure, monomer. Mg(2+) is required as a cofactor.

It catalyses the reaction adenosine(37) in tRNA + dimethylallyl diphosphate = N(6)-dimethylallyladenosine(37) in tRNA + diphosphate. Catalyzes the transfer of a dimethylallyl group onto the adenine at position 37 in tRNAs that read codons beginning with uridine, leading to the formation of N6-(dimethylallyl)adenosine (i(6)A). In Endomicrobium trichonymphae, this protein is tRNA dimethylallyltransferase.